A 285-amino-acid polypeptide reads, in one-letter code: MSNICVASSKLNLPTLLRSVFRSEFTAELRPQQEPKSLFLTRPTLFTYRRVRDGRHFSSLTRSLEFQSRSPVSSHSSLLVATDVCSTPQPSESVKLSNDQVSVSHATDSTGAISTRQSANNKKGSGTRATPDLMATESDSSKTSRSQGPRVSALSSLAKSNKKRETWQIQKDALKKKFKEGWNPPKKLSPDALDGIRHLHSVAPDRFTASVLAEQFQVSPEAIRRILKSKWRPSAEEMEERRERWDRRHDRIWSQMTELGLRPKSRRANQYSDAKVLYDDSGKQE.

Polar residues-rich tracts occupy residues 89–128 and 137–149; these read QPSE…SGTR and ESDS…SQGP. Residues 89-165 form a disordered region; it reads QPSESVKLSN…SLAKSNKKRE (77 aa).

It belongs to the RRG9 family.

The protein localises to the mitochondrion. In terms of biological role, required for respiratory activity and maintenance and expression of the mitochondrial genome. This is Required for respiratory growth protein 9, mitochondrial (rrg9) from Aspergillus clavatus (strain ATCC 1007 / CBS 513.65 / DSM 816 / NCTC 3887 / NRRL 1 / QM 1276 / 107).